We begin with the raw amino-acid sequence, 388 residues long: 3-oxo-tetronate kinase (388 aa).

ATP is bound by residues S258 and 360-363 (GGET).

Belongs to the four-carbon acid sugar kinase family.

The enzyme catalyses 3-dehydro-L-erythronate + ATP = 3-dehydro-4-O-phospho-L-erythronate + ADP + H(+). It catalyses the reaction 3-dehydro-D-erythronate + ATP = 3-dehydro-4-O-phospho-D-erythronate + ADP + H(+). In terms of biological role, catalyzes the ATP-dependent phosphorylation of 3-oxo-tetronate to 3-oxo-tetronate 4-phosphate. The chain is 3-oxo-tetronate kinase from Escherichia coli (strain K12).